Consider the following 74-residue polypeptide: Conotoxin VnMEKL-0221 (74 aa).

The first 19 residues, 1-19 (MEKLTILLLVAAVLMWTQA), serve as a signal peptide directing secretion. Positions 20–46 (LIQEKRPKEKIKFLSKRKTTAESWWEG) are excised as a propeptide. 3 disulfide bridges follow: C48–C62, C55–C66, and C61–C71.

It belongs to the conotoxin O2 superfamily. In terms of tissue distribution, expressed by the venom duct.

The protein resides in the secreted. The sequence is that of Conotoxin VnMEKL-0221 from Conus ventricosus (Mediterranean cone).